Consider the following 353-residue polypeptide: uncharacterized protein (353 aa).

Positions 69 to 106 (ISSATPSSTPPATRASSRLQPPKGHQAGGSNSQQQQPS) are disordered. A compositionally biased stretch (low complexity) spans 70-86 (SSATPSSTPPATRASSR). Residues 319 to 353 (GENKEKKMREMSRVYREMTRQMDDTRRDLDRLNQG) are a coiled coil.

This is an uncharacterized protein from Gibberella zeae (strain ATCC MYA-4620 / CBS 123657 / FGSC 9075 / NRRL 31084 / PH-1) (Wheat head blight fungus).